The sequence spans 194 residues: FMN-dependent NADH:quinone oxidoreductase (194 aa).

Residues Ser10 and 90 to 93 (MYNL) contribute to the FMN site.

It belongs to the azoreductase type 1 family. As to quaternary structure, homodimer. The cofactor is FMN.

It catalyses the reaction 2 a quinone + NADH + H(+) = 2 a 1,4-benzosemiquinone + NAD(+). The enzyme catalyses N,N-dimethyl-1,4-phenylenediamine + anthranilate + 2 NAD(+) = 2-(4-dimethylaminophenyl)diazenylbenzoate + 2 NADH + 2 H(+). In terms of biological role, quinone reductase that provides resistance to thiol-specific stress caused by electrophilic quinones. Also exhibits azoreductase activity. Catalyzes the reductive cleavage of the azo bond in aromatic azo compounds to the corresponding amines. The chain is FMN-dependent NADH:quinone oxidoreductase from Haemophilus influenzae (strain 86-028NP).